The primary structure comprises 835 residues: Peptide transporter family 1 (835 aa).

11 consecutive transmembrane segments (helical) span residues 86–106 (IFFN…SIVA), 113–133 (FWTI…LALA), 150–170 (GLLI…AFGG), 183–203 (LFFS…TFIS), 222–242 (FGIP…GSFW), 325–345 (MFLP…VWLI), 368–388 (LNAV…YPVA), 401–421 (VTGG…QLQV), 697–717 (ILWQ…FSIT), 738–758 (WLLT…LNLF), and 765–785 (FFVY…LSIF). Positions 814 to 835 (PRYSIDNKGFHPDEKDTFDMHF) are disordered. The span at 821–835 (KGFHPDEKDTFDMHF) shows a compositional bias: basic and acidic residues.

It belongs to the major facilitator superfamily. Proton-dependent oligopeptide transporter (POT/PTR) (TC 2.A.17) family. In terms of tissue distribution, expressed specifically in the intestine.

It localises to the apical cell membrane. Low-affinity peptide transporter that is necessary for proton-dependent uptake of di- or tripeptides, and to a minor extent tetrapeptides, in the intestine. Transport is independent of sodium and chloride ions. Controls the uptake of dietary fatty acids, plays a role in fatty acid synthesis and is responsible for dipeptide-induced acidification of the intestine. Regulates cellular pH differences together with the antiporter protein, nhx-2. Amino acid uptake and absorption levels influence the insulin signaling/daf-2 and let-363/TOR pathways, subsequently affecting the stress response and longevity of the organism. It is required for the uptake of the L-enantiomers of various amino acids, including L-glutamate. In response to the availability of amino acid nutrients, may play a role in promoting reproduction and fertility. The chain is Peptide transporter family 1 from Caenorhabditis elegans.